Reading from the N-terminus, the 216-residue chain is MNIILLGPPGAGKGTQATNICQKYSIPQISTGDMLREAVKADTPLGIEAKKVMDVGGLISDDIIIGLVKERIQENDCKNGFLFDGFPRTIVQAEALKTDGVKIDFVVEIQVPYEDIIARMSGRRAHLTSGRTYHIVYNPPKVEGIDDITGEELIQRTDDAEDTVRARLNIYHKQTKPLVDYYQSWMNKNSDAPKYGAVVGVGTLDEVRDRVYAQLN.

Residue 10 to 15 (GAGKGT) participates in ATP binding. An NMP region spans residues 30–59 (STGDMLREAVKADTPLGIEAKKVMDVGGLI). AMP-binding positions include Thr-31, Arg-36, 57 to 59 (GLI), 85 to 88 (GFPR), and Gln-92. The LID stretch occupies residues 122–159 (GRRAHLTSGRTYHIVYNPPKVEGIDDITGEELIQRTDD). ATP contacts are provided by residues Arg-123 and 132–133 (TY). AMP contacts are provided by Arg-156 and Arg-167. Gly-202 contributes to the ATP binding site.

The protein belongs to the adenylate kinase family. Monomer.

The protein resides in the cytoplasm. It carries out the reaction AMP + ATP = 2 ADP. It participates in purine metabolism; AMP biosynthesis via salvage pathway; AMP from ADP: step 1/1. Functionally, catalyzes the reversible transfer of the terminal phosphate group between ATP and AMP. Plays an important role in cellular energy homeostasis and in adenine nucleotide metabolism. This is Adenylate kinase from Ruthia magnifica subsp. Calyptogena magnifica.